A 181-amino-acid chain; its full sequence is TATA-box-binding protein (181 aa).

Repeat copies occupy residues 7–83 (IVNV…IKEL) and 98–173 (VQNM…LSTL).

The protein belongs to the TBP family.

General factor that plays a role in the activation of archaeal genes transcribed by RNA polymerase. Binds specifically to the TATA box promoter element which lies close to the position of transcription initiation. This Methanothermococcus thermolithotrophicus (Methanococcus thermolithotrophicus) protein is TATA-box-binding protein (tbp).